A 367-amino-acid chain; its full sequence is Probable peptidoglycan glycosyltransferase FtsW (367 aa).

The Cytoplasmic portion of the chain corresponds to 1–8 (MRRVEGYD). A helical transmembrane segment spans residues 9–29 (MIVLMMAVILTCFGVVMVYSA). Residues 30 to 49 (SSVMAAKKFHDGFFFLKRQS) lie on the Periplasmic side of the membrane. The helical transmembrane segment at 50–70 (LYALIGFIGMGVAMHVDYHVW) threads the bilayer. Topologically, residues 71 to 72 (KK) are cytoplasmic. Residues 73–93 (WAVPLFLGTFFLLLLVFVPGI) traverse the membrane as a helical segment. Residues 94-138 (GGTAKGASRWIRLPGFNFQPSELAKVALIMYMAYSLEKRQDKLKQ) lie on the Periplasmic side of the membrane. A helical membrane pass occupies residues 139-159 (FMSGFFPYMLILGVFIAVLLA). The Cytoplasmic portion of the chain corresponds to 160–161 (QH). A helical transmembrane segment spans residues 162–182 (DMGAALTMLAVAIVMLFAAGT). Residue K183 is a topological domain, periplasmic. A helical transmembrane segment spans residues 184–204 (VQYILGMGLVALPGICYLVFT). Residues 205 to 225 (KAYRMRRITAFLDPWQDPTDA) lie on the Cytoplasmic side of the membrane. Residues 226–246 (GFQIIQSWLALGTGGFFGQGL) traverse the membrane as a helical segment. Residues 247–266 (GEGKQKLFYLPEAHTDFILS) lie on the Periplasmic side of the membrane. The chain crosses the membrane as a helical span at residues 267-287 (VLGEEMGFIGVVVIASMFLLL). At 288-304 (VQRSIRVAIAAEDSFGR) the chain is on the cytoplasmic side. A helical transmembrane segment spans residues 305–325 (FLAFGIAILLGLEAFVNMAVV). Over 326-335 (TGLLPTKGIA) the chain is Periplasmic. A helical membrane pass occupies residues 336–356 (LPFLSYGGSSLIISLCSVGVL). Topologically, residues 357 to 367 (LNVSTRMRGAA) are cytoplasmic.

This sequence belongs to the SEDS family. FtsW subfamily.

It is found in the cell inner membrane. It carries out the reaction [GlcNAc-(1-&gt;4)-Mur2Ac(oyl-L-Ala-gamma-D-Glu-L-Lys-D-Ala-D-Ala)](n)-di-trans,octa-cis-undecaprenyl diphosphate + beta-D-GlcNAc-(1-&gt;4)-Mur2Ac(oyl-L-Ala-gamma-D-Glu-L-Lys-D-Ala-D-Ala)-di-trans,octa-cis-undecaprenyl diphosphate = [GlcNAc-(1-&gt;4)-Mur2Ac(oyl-L-Ala-gamma-D-Glu-L-Lys-D-Ala-D-Ala)](n+1)-di-trans,octa-cis-undecaprenyl diphosphate + di-trans,octa-cis-undecaprenyl diphosphate + H(+). The protein operates within cell wall biogenesis; peptidoglycan biosynthesis. Its function is as follows. Peptidoglycan polymerase that is essential for cell division. In Geobacter sp. (strain M18), this protein is Probable peptidoglycan glycosyltransferase FtsW.